A 479-amino-acid polypeptide reads, in one-letter code: Aspartyl/glutamyl-tRNA(Asn/Gln) amidotransferase subunit B (479 aa).

It belongs to the GatB/GatE family. GatB subfamily. Heterotrimer of A, B and C subunits.

It catalyses the reaction L-glutamyl-tRNA(Gln) + L-glutamine + ATP + H2O = L-glutaminyl-tRNA(Gln) + L-glutamate + ADP + phosphate + H(+). The enzyme catalyses L-aspartyl-tRNA(Asn) + L-glutamine + ATP + H2O = L-asparaginyl-tRNA(Asn) + L-glutamate + ADP + phosphate + 2 H(+). Its function is as follows. Allows the formation of correctly charged Asn-tRNA(Asn) or Gln-tRNA(Gln) through the transamidation of misacylated Asp-tRNA(Asn) or Glu-tRNA(Gln) in organisms which lack either or both of asparaginyl-tRNA or glutaminyl-tRNA synthetases. The reaction takes place in the presence of glutamine and ATP through an activated phospho-Asp-tRNA(Asn) or phospho-Glu-tRNA(Gln). This chain is Aspartyl/glutamyl-tRNA(Asn/Gln) amidotransferase subunit B, found in Mesoplasma florum (strain ATCC 33453 / NBRC 100688 / NCTC 11704 / L1) (Acholeplasma florum).